The chain runs to 393 residues: Major outer membrane porin, serovar E (393 aa).

An N-terminal signal peptide occupies residues 1–22 (MKKLLKSVLVFAALSSASSLQA).

Belongs to the chlamydial porin (CP) (TC 1.B.2) family. In terms of assembly, part of a disulfide cross-linked outer membrane complex (COMC) composed of the major outer membrane porin (MOMP), the small cysteine-rich protein (OmcA) and the large cysteine-rich periplasmic protein (OmcB).

The protein localises to the cell outer membrane. Its function is as follows. In elementary bodies (EBs, the infectious stage, which is able to survive outside the host cell) provides the structural integrity of the outer envelope through disulfide cross-links with the small cysteine-rich protein and the large cysteine-rich periplasmic protein. It has been described in publications as the Sarkosyl-insoluble COMC (Chlamydia outer membrane complex), and serves as the functional equivalent of peptidoglycan. Permits diffusion of specific solutes through the outer membrane. The protein is Major outer membrane porin, serovar E (ompA) of Chlamydia trachomatis.